Here is a 691-residue protein sequence, read N- to C-terminus: Kinetochore protein NDC80 (691 aa).

The disordered stretch occupies residues Met-1–Ser-95. Positions His-10–Arg-19 are enriched in basic and acidic residues. Over residues Phe-20 to Leu-42 the composition is skewed to polar residues. Thr-38 carries the phosphothreonine modification. Low complexity predominate over residues Thr-54–Ile-65. At Thr-248 the chain carries Phosphothreonine. Coiled coils occupy residues Gly-376–Ser-446 and Lys-522–Glu-686.

Belongs to the NDC80/HEC1 family. In terms of assembly, component of the NDC80 complex, which consists of NDC80, NUF2, SPC24 and SPC25. The NDC80 complex is formed by two subcomplexes, NDC80-NUF2 and SPC24-SPC25, which are joined end-to-end through their coiled-coil domains. It has a rod-like structure with a length of 570 Angstroms and globular domains at either end. The NDC80-NUF2 globular domains are probably directed to microtubules, the SPC24-SPC25 globular domains to the centromere. NDC80 probably interacts with SMC1 and SMC2. Also interacts with KIN3. Interacts with DMC1.

It localises to the nucleus. The protein localises to the chromosome. It is found in the centromere. The protein resides in the kinetochore. In terms of biological role, acts as a component of the essential kinetochore-associated NDC80 complex, which is involved in chromosome segregation and spindle checkpoint activity. This Saccharomyces cerevisiae (strain ATCC 204508 / S288c) (Baker's yeast) protein is Kinetochore protein NDC80.